Reading from the N-terminus, the 40-residue chain is Ostricacin-3 (40 aa).

Intrachain disulfides connect Cys8-Cys36, Cys15-Cys30, and Cys20-Cys37.

The protein localises to the secreted. In terms of biological role, has antibacterial activity against the Gram-positive bacterium S.aureus 1056 MRSA (MIC=2.78 ug/ml) and the Gram-negative bacterium E.coli O157:H7 (MIC=2.41 ug/ml). Does not have antifungal activity against the yeast C.albicans 3153A. The polypeptide is Ostricacin-3 (Struthio camelus (Common ostrich)).